The sequence spans 213 residues: Protein DMP4 (213 aa).

Transmembrane regions (helical) follow at residues 51–71 (LANLLPTGTVLAFQLLSPIFS), 78–98 (LVSKIMTSTLVAICGFSCFIL), 142–162 (FIDFVHAFMSLFVFGAVVLFD), and 180–200 (VLTALPVGVGVFSSMLFATFP).

This sequence belongs to the plant DMP1 protein family. Expressed in leaves, flowers and siliques, especially in vascular tissues.

Its subcellular location is the vacuole membrane. Involved in membrane remodeling. In Arabidopsis thaliana (Mouse-ear cress), this protein is Protein DMP4.